Reading from the N-terminus, the 274-residue chain is Ribosomal RNA small subunit methyltransferase A (274 aa).

S-adenosyl-L-methionine contacts are provided by His-15, Leu-17, Gly-42, Glu-64, Asp-89, and Asn-108.

Belongs to the class I-like SAM-binding methyltransferase superfamily. rRNA adenine N(6)-methyltransferase family. RsmA subfamily.

The protein resides in the cytoplasm. It carries out the reaction adenosine(1518)/adenosine(1519) in 16S rRNA + 4 S-adenosyl-L-methionine = N(6)-dimethyladenosine(1518)/N(6)-dimethyladenosine(1519) in 16S rRNA + 4 S-adenosyl-L-homocysteine + 4 H(+). Functionally, specifically dimethylates two adjacent adenosines (A1518 and A1519) in the loop of a conserved hairpin near the 3'-end of 16S rRNA in the 30S particle. May play a critical role in biogenesis of 30S subunits. This is Ribosomal RNA small subunit methyltransferase A from Prochlorococcus marinus (strain MIT 9301).